Consider the following 185-residue polypeptide: Ribosome-recycling factor (185 aa).

It belongs to the RRF family.

It localises to the cytoplasm. Its function is as follows. Responsible for the release of ribosomes from messenger RNA at the termination of protein biosynthesis. May increase the efficiency of translation by recycling ribosomes from one round of translation to another. This chain is Ribosome-recycling factor, found in Streptococcus pneumoniae serotype 2 (strain D39 / NCTC 7466).